We begin with the raw amino-acid sequence, 715 residues long: Polyribonucleotide nucleotidyltransferase (715 aa).

Positions 489 and 495 each coordinate Mg(2+). One can recognise a KH domain in the interval 556-615 (PRIETLRIPTEKIREVIGTGGKVIREICEKTGAKINIEDDGTVKVASSDGNSIKAAINWI). The 69-residue stretch at 625 to 693 (GHIYDGTVVK…DRGKVRLSMR (69 aa)) folds into the S1 motif domain.

This sequence belongs to the polyribonucleotide nucleotidyltransferase family. Requires Mg(2+) as cofactor.

Its subcellular location is the cytoplasm. The catalysed reaction is RNA(n+1) + phosphate = RNA(n) + a ribonucleoside 5'-diphosphate. Involved in mRNA degradation. Catalyzes the phosphorolysis of single-stranded polyribonucleotides processively in the 3'- to 5'-direction. This chain is Polyribonucleotide nucleotidyltransferase, found in Beijerinckia indica subsp. indica (strain ATCC 9039 / DSM 1715 / NCIMB 8712).